Reading from the N-terminus, the 502-residue chain is ATP synthase subunit alpha (502 aa).

Gly-169 to Thr-176 contacts ATP.

This sequence belongs to the ATPase alpha/beta chains family. In terms of assembly, F-type ATPases have 2 components, CF(1) - the catalytic core - and CF(0) - the membrane proton channel. CF(1) has five subunits: alpha(3), beta(3), gamma(1), delta(1), epsilon(1). CF(0) has three main subunits: a(1), b(2) and c(9-12). The alpha and beta chains form an alternating ring which encloses part of the gamma chain. CF(1) is attached to CF(0) by a central stalk formed by the gamma and epsilon chains, while a peripheral stalk is formed by the delta and b chains.

It localises to the cell inner membrane. It catalyses the reaction ATP + H2O + 4 H(+)(in) = ADP + phosphate + 5 H(+)(out). In terms of biological role, produces ATP from ADP in the presence of a proton gradient across the membrane. The alpha chain is a regulatory subunit. The polypeptide is ATP synthase subunit alpha (Geotalea uraniireducens (strain Rf4) (Geobacter uraniireducens)).